The following is a 149-amino-acid chain: Transcriptional repressor NrdR (149 aa).

A zinc finger spans residues 3–34; it reads CPFCFAVDTKVIDSRLVGEGSSVRRRRQCLVC. The ATP-cone domain maps to 49–139; that stretch reads PRVVKSNDVR…VYRSFEDIKE (91 aa).

The protein belongs to the NrdR family. Zn(2+) is required as a cofactor.

In terms of biological role, negatively regulates transcription of bacterial ribonucleotide reductase nrd genes and operons by binding to NrdR-boxes. This chain is Transcriptional repressor NrdR, found in Shigella flexneri.